Here is a 215-residue protein sequence, read N- to C-terminus: Protein GET1 (215 aa).

Residues 1–4 (MINL) lie on the Lumenal side of the membrane. A helical transmembrane segment spans residues 5–24 (ALVIFLCTLLNQIVSWVGKS). The Cytoplasmic portion of the chain corresponds to 25–108 (VLQEIAFTAY…SFSKKFSTLL (84 aa)). Positions 73-94 (AKLRRKLDKGLADLEKTNNTLS) form a coiled coil. The helical transmembrane segment at 109–129 (WLMTTGAQFLLSWWFRKQPIF) threads the bilayer. The Lumenal segment spans residues 130 to 153 (WLPEGWVPYPVAWLLSFPSAPIGS). A helical membrane pass occupies residues 154–170 (VSSGAWGAICRRVLSTL). At 171–215 (QEIIQSVLAPSPAATGPVPTGPSSAKNDQPEAKIEALALEHEKLD) the chain is on the cytoplasmic side. The segment at 181–202 (SPAATGPVPTGPSSAKNDQPEA) is disordered.

It belongs to the WRB/GET1 family. As to quaternary structure, interacts with GET3.

The protein localises to the endoplasmic reticulum membrane. Its function is as follows. Required for the post-translational delivery of tail-anchored (TA) proteins to the endoplasmic reticulum. Acts as a membrane receptor for soluble GET3, which recognizes and selectively binds the transmembrane domain of TA proteins in the cytosol. This chain is Protein GET1, found in Cryptococcus neoformans var. neoformans serotype D (strain B-3501A) (Filobasidiella neoformans).